We begin with the raw amino-acid sequence, 301 residues long: 33 kDa chaperonin (301 aa).

2 disulfide bridges follow: Cys-244–Cys-246 and Cys-277–Cys-280.

It belongs to the HSP33 family. Under oxidizing conditions two disulfide bonds are formed involving the reactive cysteines. Under reducing conditions zinc is bound to the reactive cysteines and the protein is inactive.

It is found in the cytoplasm. Its function is as follows. Redox regulated molecular chaperone. Protects both thermally unfolding and oxidatively damaged proteins from irreversible aggregation. Plays an important role in the bacterial defense system toward oxidative stress. In Geobacter sulfurreducens (strain ATCC 51573 / DSM 12127 / PCA), this protein is 33 kDa chaperonin.